The chain runs to 58 residues: Ribulose bisphosphate carboxylase large chain (58 aa).

Residues 1 to 2 (MS) constitute a propeptide that is removed on maturation. At Pro3 the chain carries N-acetylproline. Lys14 is modified (N6,N6,N6-trimethyllysine).

This sequence belongs to the RuBisCO large chain family. Type I subfamily. In terms of assembly, heterohexadecamer of 8 large chains and 8 small chains.

It localises to the plastid. The protein resides in the chloroplast. It catalyses the reaction 2 (2R)-3-phosphoglycerate + 2 H(+) = D-ribulose 1,5-bisphosphate + CO2 + H2O. The catalysed reaction is D-ribulose 1,5-bisphosphate + O2 = 2-phosphoglycolate + (2R)-3-phosphoglycerate + 2 H(+). Functionally, ruBisCO catalyzes two reactions: the carboxylation of D-ribulose 1,5-bisphosphate, the primary event in carbon dioxide fixation, as well as the oxidative fragmentation of the pentose substrate in the photorespiration process. Both reactions occur simultaneously and in competition at the same active site. In Weinmannia silvicola (Towai), this protein is Ribulose bisphosphate carboxylase large chain (rbcL).